The chain runs to 424 residues: Gamma-glutamyl phosphate reductase (424 aa).

This sequence belongs to the gamma-glutamyl phosphate reductase family.

It is found in the cytoplasm. It catalyses the reaction L-glutamate 5-semialdehyde + phosphate + NADP(+) = L-glutamyl 5-phosphate + NADPH + H(+). It participates in amino-acid biosynthesis; L-proline biosynthesis; L-glutamate 5-semialdehyde from L-glutamate: step 2/2. In terms of biological role, catalyzes the NADPH-dependent reduction of L-glutamate 5-phosphate into L-glutamate 5-semialdehyde and phosphate. The product spontaneously undergoes cyclization to form 1-pyrroline-5-carboxylate. In Shewanella sediminis (strain HAW-EB3), this protein is Gamma-glutamyl phosphate reductase.